A 620-amino-acid polypeptide reads, in one-letter code: MHLHYKPNGCLFILQNAIDCARLTGQSIYTIEVFRPVRNIWNRAQEWARAAITPAGLGWMSKYIYQYHRLMLMNLSPREPATHNWPLYNYPPPHILVGYQKLLQICNDYIFDVRAYSRLKYSEQINFGSQLMNWSVMANCSYTINTGAYHRFIDMDNFSDTLTSIQQAILAEKIVADLALIRPMRGFGRTNLDADHDVPVEYLLQEQSKDIGACQERAWGLADRIRVQNAGRKDLVILTTIRKLKTAYFNFFLVKHLPLAPEQELSLPCDCFWLDAFIQKFAESDQAAEIDEALRLQQVPTQTLTKCIISALSLPNCAGTALRGGAFTLRPREGNRAVTESMRRARGEMIEQFVDRLPMRRRRRREVPQPQVAAEEYPSEPEELSFESEVRTAVAETIRLLEEELTVSARNQQFFNFAVNFYEVIQRLEALGDINETTLQRWVMYFFVAEHIATTLNYLNHQIRVSSPFGRYVMLNLAQVVMRARNEDGQIVYSRARNENGNTVLVTSCLALALTWLPQLREQGEEIRAGRDEQFMAEIAYHDNSGDVSEILKQVAVNDADIDSMEISFRFRVTGPVVFSGLREIQNINRRVIRAATLFRQERRPLPALNERVQLPPAQE.

Residues 356-365 (RLPMRRRRRR) carry the Nuclear localization signal motif. Ser-545 is modified (O-(5'-phospho-DNA)-serine).

This sequence belongs to the adenoviridae terminal protein family. Heterodimer with the polymerase; this heterodimer binds to bp 9 to 18 of the genome. Interacts with host POU2F1; POU2F1 binds to the auxiliary sequences in the inverted terminal repeats and tethers the pTP-POL heterodimer to the origin DNA thereby participating in the assembly of the pre-initiation complex (POL-TP-DBP-NFIA-POU2F1). Preterminal protein is used to replicate viral genome, upon genomic encapsidation it is processed first into iTP and finally into TP by adenovirus protease.

The protein localises to the host nucleus matrix. Its function is as follows. Protein covalently bound to the viral DNA that acts as a primer for viral genomic replication by DNA strand displacement. Assembles on the viral origin of replication in an initiation complex with viral polymerase, DBP, host NFIA and host POU2F1/OCT1. During initiation, the polymerase covalently couples the first dCTP with Ser-580 of pTP. The terminal protein stimulates the template activity over 20 fold compared to protein-free templates. Neo-synthesized viral genomes are linked to two preterminal proteins, one for each 5' end. These new genomes are encapsidated in the nucleus, and during capsid maturation by viral protease, preterminal protein is first cleaved into intermediary (iTP), then into mature TP. May play a role in host nuclear matrix localization of genomic DNA. In Bovine adenovirus 2 (BAdV-2), this protein is Preterminal protein.